The following is a 134-amino-acid chain: Small ribosomal subunit protein uS8c (134 aa).

It belongs to the universal ribosomal protein uS8 family. In terms of assembly, part of the 30S ribosomal subunit.

The protein resides in the plastid. It is found in the chloroplast. One of the primary rRNA binding proteins, it binds directly to 16S rRNA central domain where it helps coordinate assembly of the platform of the 30S subunit. The sequence is that of Small ribosomal subunit protein uS8c (rps8) from Panax ginseng (Korean ginseng).